Consider the following 228-residue polypeptide: MGPGWSPARRLWPLLWRRAVFQRAGPAMASVPWLPRLAERWLPARPATCLTPSLTRGLHHGPQPEERTAGDARLQPGPADHIGAKFDIDMLVSLLRQENARDICVIQVPPEMRYTDYFVIGSGTSTRHLHAMVHYLVKMYKHLKCRSDPYVKIEGKDADDWLCVDFGSMVIHLMLPETRETYELEKLWTLRSFDDQLAQIAAETLPEDFILGLEDDTSSLTPVEFKCK.

The disordered stretch occupies residues 53-77 (SLTRGLHHGPQPEERTAGDARLQPG).

Belongs to the Iojap/RsfS family. As to quaternary structure, associates with the mitochondrial ribosome large subunit (39S) via interaction with MRPL12 and/or MRPL14. The interaction generates steric hindrance that is expected to prevent premature association of the 28S and 39S ribosomal subunits. Identified in a complex composed of MALSU1, MIEF1 upstream open reading frame protein and NDUFAB1; within the trimeric complex, MIEF1 upstream open reading frame protein functions as a bridging scaffold that interacts with MALSU1 on one side, and with NDUFAB1 on the other side. Interacts with MRPL12 and MRPL14.

It localises to the mitochondrion matrix. Functionally, required for normal mitochondrial ribosome function and mitochondrial translation. May play a role in ribosome biogenesis by preventing premature association of the 28S and 39S ribosomal subunits. Interacts with mitochondrial ribosomal protein uL14m (MRPL14), probably blocking formation of intersubunit bridge B8, preventing association of the 28S and 39S ribosomal subunits. Addition to isolated mitochondrial ribosomal subunits partially inhibits translation, probably by interfering with the association of the 28S and 39S ribosomal subunits and the formation of functional ribosomes. May also participate in the assembly and/or regulation of the stability of the large subunit of the mitochondrial ribosome. May function as a ribosomal silencing factor. The chain is Mitochondrial assembly of ribosomal large subunit protein 1 (Malsu1) from Mus musculus (Mouse).